Reading from the N-terminus, the 78-residue chain is Glycophorin-E (78 aa).

Positions 1–19 (MYGKIIFVLLLSGIVSISA) are cleaved as a signal peptide. Residues 20–52 (SSTTGVAMHTSTSSSVTKSYISSQTNGITLINW) are Extracellular-facing. The chain crosses the membrane as a helical span at residues 53-73 (WAMARVIFEVMLVVVGMIILI). Topologically, residues 74-78 (SYCIR) are cytoplasmic.

This sequence belongs to the glycophorin-A family. The N-terminal extracellular domain is heavily glycosylated on serine and threonine residues. In terms of tissue distribution, erythrocytes.

The protein resides in the membrane. Its function is as follows. This protein is a minor sialoglycoprotein in human erythrocyte membranes. This Homo sapiens (Human) protein is Glycophorin-E (GYPE).